We begin with the raw amino-acid sequence, 272 residues long: Secretagogin (272 aa).

EF-hand domains follow at residues 8-43, 53-89, 101-136, 145-180, 193-228, and 237-272; these read LDAAGFLQIWQHFDADDNGYIEGKELDDFFRHMLKK, ERVQQIKKSFMSAYDATFDGRLQIEELANMILPQEEN, DNSVEFMKIWRKYDADSSGYISAAELKNFLKDLFLQ, KLDEYTDAMMKIFDKNKDGRLDLNDLARILALQENF, ERKRDFEKIFAHYDVSRTGALEGPEVDGFVKDMMEL, and DLDKFRECLLTHCDMNKDGKIQKSELALCLGLKHKP. Asp21, Asp23, Asn25, Tyr27, and Glu32 together coordinate Ca(2+). 19 residues coordinate Ca(2+): Asp114, Asp116, Ser118, Tyr120, Glu125, Asp158, Asn160, Asp162, Arg164, Asp169, Asp206, Ser208, Thr210, Glu217, Asp250, Asn252, Asp254, Lys256, and Glu261.

Its subcellular location is the cytoplasm. This chain is Secretagogin (scgn), found in Danio rerio (Zebrafish).